We begin with the raw amino-acid sequence, 138 residues long: Small ribosomal subunit protein uS12 (138 aa).

The disordered stretch occupies residues 33 to 55; it reads KEHTNVSSPQKRGVCTRVGTMTP.

Belongs to the universal ribosomal protein uS12 family. In terms of assembly, part of the 30S ribosomal subunit. Contacts proteins S8 and S17. May interact with IF1 in the 30S initiation complex. Interacts with BrxC.

With S4 and S5 plays an important role in translational accuracy. Functionally, interacts with and stabilizes bases of the 16S rRNA that are involved in tRNA selection in the A site and with the mRNA backbone. Located at the interface of the 30S and 50S subunits, it traverses the body of the 30S subunit contacting proteins on the other side and probably holding the rRNA structure together. The combined cluster of proteins S8, S12 and S17 appears to hold together the shoulder and platform of the 30S subunit. This chain is Small ribosomal subunit protein uS12 (rpsL), found in Bacillus subtilis (strain 168).